The sequence spans 476 residues: Probable cytosolic Fe-S cluster assembly factor GJ13047 (476 aa).

[4Fe-4S] cluster-binding residues include Cys-23, Cys-68, Cys-71, Cys-74, Cys-187, Cys-243, Cys-395, and Cys-399.

The protein belongs to the NARF family.

In terms of biological role, component of the cytosolic iron-sulfur (Fe/S) protein assembly machinery. Required for maturation of extramitochondrial Fe/S proteins. In Drosophila virilis (Fruit fly), this protein is Probable cytosolic Fe-S cluster assembly factor GJ13047.